Consider the following 458-residue polypeptide: Methylenetetrahydrofolate--tRNA-(uracil-5-)-methyltransferase TrmFO (458 aa).

An FAD-binding site is contributed by 12–17 (GAGLAG).

It belongs to the MnmG family. TrmFO subfamily. The cofactor is FAD.

The protein localises to the cytoplasm. The catalysed reaction is uridine(54) in tRNA + (6R)-5,10-methylene-5,6,7,8-tetrahydrofolate + NADH + H(+) = 5-methyluridine(54) in tRNA + (6S)-5,6,7,8-tetrahydrofolate + NAD(+). It carries out the reaction uridine(54) in tRNA + (6R)-5,10-methylene-5,6,7,8-tetrahydrofolate + NADPH + H(+) = 5-methyluridine(54) in tRNA + (6S)-5,6,7,8-tetrahydrofolate + NADP(+). Catalyzes the folate-dependent formation of 5-methyl-uridine at position 54 (M-5-U54) in all tRNAs. The sequence is that of Methylenetetrahydrofolate--tRNA-(uracil-5-)-methyltransferase TrmFO from Deinococcus geothermalis (strain DSM 11300 / CIP 105573 / AG-3a).